A 182-amino-acid chain; its full sequence is Bifunctional protein PyrR (182 aa).

A PRPP-binding motif is present at residues 100 to 112 (VVLVDDVLYTGRT).

It belongs to the purine/pyrimidine phosphoribosyltransferase family. PyrR subfamily. In terms of assembly, homodimer and homohexamer; in equilibrium.

It catalyses the reaction UMP + diphosphate = 5-phospho-alpha-D-ribose 1-diphosphate + uracil. In terms of biological role, regulates transcriptional attenuation of the pyrimidine nucleotide (pyr) operon by binding in a uridine-dependent manner to specific sites on pyr mRNA. This disrupts an antiterminator hairpin in the RNA and favors formation of a downstream transcription terminator, leading to a reduced expression of downstream genes. Also displays a weak uracil phosphoribosyltransferase activity which is not physiologically significant. This chain is Bifunctional protein PyrR, found in Natranaerobius thermophilus (strain ATCC BAA-1301 / DSM 18059 / JW/NM-WN-LF).